The primary structure comprises 113 residues: UPF0342 protein SMU_782 (113 aa).

This sequence belongs to the UPF0342 family.

The sequence is that of UPF0342 protein SMU_782 from Streptococcus mutans serotype c (strain ATCC 700610 / UA159).